The sequence spans 288 residues: Pyridoxal kinase PdxY (288 aa).

Residues S12 and 47–48 (TQ) contribute to the substrate site. ATP-binding positions include D114, E151, K184, and 211 to 214 (RPLL). D225 is a binding site for substrate.

It belongs to the pyridoxine kinase family. PdxY subfamily. In terms of assembly, homodimer. Mg(2+) serves as cofactor.

The enzyme catalyses pyridoxal + ATP = pyridoxal 5'-phosphate + ADP + H(+). Its pathway is cofactor metabolism; pyridoxal 5'-phosphate salvage; pyridoxal 5'-phosphate from pyridoxal: step 1/1. Pyridoxal kinase involved in the salvage pathway of pyridoxal 5'-phosphate (PLP). Catalyzes the phosphorylation of pyridoxal to PLP. The protein is Pyridoxal kinase PdxY of Pseudomonas aeruginosa (strain UCBPP-PA14).